We begin with the raw amino-acid sequence, 503 residues long: ATP synthase subunit alpha (503 aa).

170 to 177 (GDKQTGKT) serves as a coordination point for ATP.

Belongs to the ATPase alpha/beta chains family. In terms of assembly, F-type ATPases have 2 components, CF(1) - the catalytic core - and CF(0) - the membrane proton channel. CF(1) has five subunits: alpha(3), beta(3), gamma(1), delta(1), epsilon(1). CF(0) has three main subunits: a(1), b(2) and c(9-12). The alpha and beta chains form an alternating ring which encloses part of the gamma chain. CF(1) is attached to CF(0) by a central stalk formed by the gamma and epsilon chains, while a peripheral stalk is formed by the delta and b chains.

The protein resides in the cell inner membrane. The enzyme catalyses ATP + H2O + 4 H(+)(in) = ADP + phosphate + 5 H(+)(out). In terms of biological role, produces ATP from ADP in the presence of a proton gradient across the membrane. The alpha chain is a regulatory subunit. The protein is ATP synthase subunit alpha of Helicobacter pylori (strain G27).